The chain runs to 31 residues: leu operon leader peptide (31 aa).

Involved in control of the biosynthesis of leucine. The polypeptide is leu operon leader peptide (leuL) (Buchnera aphidicola subsp. Rhopalosiphum padi).